A 100-amino-acid polypeptide reads, in one-letter code: Small ubiquitin-related modifier 1 (100 aa).

The 78-residue stretch at 19–96 folds into the Ubiquitin-like domain; it reads EYIKLKVIGQ…IEVYQEQTGG (78 aa). A Glycyl lysine isopeptide (Gly-Lys) (interchain with K-? in acceptor proteins) cross-link involves residue glycine 96. Residues 97–100 constitute a propeptide that is removed on maturation; the sequence is CRND.

It belongs to the ubiquitin family. SUMO subfamily. Interacts with sae2, ube2i, ranbp2, pias1 and pias2. Covalently attached to a number of proteins. In terms of processing, cleavage of precursor form by a sentrin-specific protease is necessary for function.

It is found in the nucleus membrane. The protein resides in the nucleus speckle. Its subcellular location is the cytoplasm. It localises to the nucleus. The protein localises to the PML body. It is found in the cell membrane. Its function is as follows. Ubiquitin-like protein that can be covalently attached to proteins as a monomer or a lysine-linked polymer. Covalent attachment via an isopeptide bond to its substrates requires prior activation by the E1 complex sae1-sae2 and linkage to the E2 enzyme ube2i. This post-translational modification on lysine residues of proteins plays a crucial role in a number of cellular processes such as nuclear transport, DNA replication and repair, mitosis and signal transduction. Polymeric sumo1 chains are also susceptible to polyubiquitination which functions as a signal for proteasomal degradation of modified proteins. This is Small ubiquitin-related modifier 1 (sumo1) from Danio rerio (Zebrafish).